We begin with the raw amino-acid sequence, 214 residues long: ATP-dependent Clp protease proteolytic subunit (214 aa).

S110 acts as the Nucleophile in catalysis. Residue H135 is part of the active site.

It belongs to the peptidase S14 family. Fourteen ClpP subunits assemble into 2 heptameric rings which stack back to back to give a disk-like structure with a central cavity, resembling the structure of eukaryotic proteasomes.

The protein resides in the cytoplasm. It catalyses the reaction Hydrolysis of proteins to small peptides in the presence of ATP and magnesium. alpha-casein is the usual test substrate. In the absence of ATP, only oligopeptides shorter than five residues are hydrolyzed (such as succinyl-Leu-Tyr-|-NHMec, and Leu-Tyr-Leu-|-Tyr-Trp, in which cleavage of the -Tyr-|-Leu- and -Tyr-|-Trp bonds also occurs).. In terms of biological role, cleaves peptides in various proteins in a process that requires ATP hydrolysis. Has a chymotrypsin-like activity. Plays a major role in the degradation of misfolded proteins. The sequence is that of ATP-dependent Clp protease proteolytic subunit from Legionella pneumophila (strain Paris).